A 325-amino-acid polypeptide reads, in one-letter code: Thiamine-monophosphate kinase (325 aa).

The Mg(2+) site is built by D30, S45, T46, and D47. H54 serves as a coordination point for substrate. Mg(2+)-binding residues include D75 and D122. Residues 121–122 and R146 each bind ATP; that span reads GD. A Mg(2+)-binding site is contributed by D212. S214 contributes to the ATP binding site. D215 serves as a coordination point for Mg(2+). 2 residues coordinate substrate: E263 and Y319.

Belongs to the thiamine-monophosphate kinase family.

The catalysed reaction is thiamine phosphate + ATP = thiamine diphosphate + ADP. It participates in cofactor biosynthesis; thiamine diphosphate biosynthesis; thiamine diphosphate from thiamine phosphate: step 1/1. With respect to regulation, is markedly activated by the monovalent cations K(+), NH(4)(+), and Rb(+). Is significantly inhibited by ADP, AMP, p-chloromercuribenzoate, N-ethylmaleimide, pyrophosphate, and EDTA. Functionally, catalyzes the ATP-dependent phosphorylation of thiamine-monophosphate (TMP) to form thiamine-pyrophosphate (TPP), the active form of vitamin B1. Cannot use thiamine as substrate. Is highly specific for ATP as phosphate donor. This is Thiamine-monophosphate kinase (thiL) from Escherichia coli (strain K12).